The primary structure comprises 635 residues: Threonine--tRNA ligase (635 aa).

Residues 1-61 (MIKITLKDGK…HKDSSLEILT (61 aa)) form the TGS domain. Positions 242–532 (DHRKLGKELD…LIEQYAGAFP (291 aa)) are catalytic. Residues cysteine 333, histidine 384, and histidine 509 each coordinate Zn(2+).

This sequence belongs to the class-II aminoacyl-tRNA synthetase family. As to quaternary structure, homodimer. The cofactor is Zn(2+).

The protein localises to the cytoplasm. It carries out the reaction tRNA(Thr) + L-threonine + ATP = L-threonyl-tRNA(Thr) + AMP + diphosphate + H(+). Functionally, catalyzes the attachment of threonine to tRNA(Thr) in a two-step reaction: L-threonine is first activated by ATP to form Thr-AMP and then transferred to the acceptor end of tRNA(Thr). Also edits incorrectly charged L-seryl-tRNA(Thr). The protein is Threonine--tRNA ligase of Clostridium botulinum (strain 657 / Type Ba4).